A 291-amino-acid polypeptide reads, in one-letter code: tRNA dimethylallyltransferase (291 aa).

9-16 (GTTASGKT) lines the ATP pocket. 11–16 (TASGKT) serves as a coordination point for substrate. The interaction with substrate tRNA stretch occupies residues 34-37 (DSLC).

It belongs to the IPP transferase family. As to quaternary structure, monomer. Mg(2+) serves as cofactor.

It catalyses the reaction adenosine(37) in tRNA + dimethylallyl diphosphate = N(6)-dimethylallyladenosine(37) in tRNA + diphosphate. In terms of biological role, catalyzes the transfer of a dimethylallyl group onto the adenine at position 37 in tRNAs that read codons beginning with uridine, leading to the formation of N6-(dimethylallyl)adenosine (i(6)A). The chain is tRNA dimethylallyltransferase from Campylobacter lari (strain RM2100 / D67 / ATCC BAA-1060).